Here is a 187-residue protein sequence, read N- to C-terminus: Large ribosomal subunit protein uL5 (187 aa).

The protein belongs to the universal ribosomal protein uL5 family. Part of the 50S ribosomal subunit; part of the 5S rRNA/L5/L18/L25 subcomplex. Contacts the 5S rRNA and the P site tRNA. Forms a bridge to the 30S subunit in the 70S ribosome.

In terms of biological role, this is one of the proteins that bind and probably mediate the attachment of the 5S RNA into the large ribosomal subunit, where it forms part of the central protuberance. In the 70S ribosome it contacts protein S13 of the 30S subunit (bridge B1b), connecting the 2 subunits; this bridge is implicated in subunit movement. Contacts the P site tRNA; the 5S rRNA and some of its associated proteins might help stabilize positioning of ribosome-bound tRNAs. This is Large ribosomal subunit protein uL5 from Mycolicibacterium paratuberculosis (strain ATCC BAA-968 / K-10) (Mycobacterium paratuberculosis).